Reading from the N-terminus, the 211-residue chain is Imidazole glycerol phosphate synthase subunit HisH (211 aa).

A Glutamine amidotransferase type-1 domain is found at 4 to 211 (TVALLDYGSG…QLLRNWINYI (208 aa)). Cys-82 functions as the Nucleophile in the catalytic mechanism. Residues His-192 and Glu-194 contribute to the active site.

In terms of assembly, heterodimer of HisH and HisF.

It localises to the cytoplasm. It catalyses the reaction 5-[(5-phospho-1-deoxy-D-ribulos-1-ylimino)methylamino]-1-(5-phospho-beta-D-ribosyl)imidazole-4-carboxamide + L-glutamine = D-erythro-1-(imidazol-4-yl)glycerol 3-phosphate + 5-amino-1-(5-phospho-beta-D-ribosyl)imidazole-4-carboxamide + L-glutamate + H(+). It carries out the reaction L-glutamine + H2O = L-glutamate + NH4(+). It participates in amino-acid biosynthesis; L-histidine biosynthesis; L-histidine from 5-phospho-alpha-D-ribose 1-diphosphate: step 5/9. Functionally, IGPS catalyzes the conversion of PRFAR and glutamine to IGP, AICAR and glutamate. The HisH subunit catalyzes the hydrolysis of glutamine to glutamate and ammonia as part of the synthesis of IGP and AICAR. The resulting ammonia molecule is channeled to the active site of HisF. In Corynebacterium glutamicum (strain ATCC 13032 / DSM 20300 / JCM 1318 / BCRC 11384 / CCUG 27702 / LMG 3730 / NBRC 12168 / NCIMB 10025 / NRRL B-2784 / 534), this protein is Imidazole glycerol phosphate synthase subunit HisH (hisH).